The primary structure comprises 233 residues: Nickel import system ATP-binding protein NikE (233 aa).

The ABC transporter domain occupies 2-228 (IELKHVTFGY…DRHPYTKELV (227 aa)). 35 to 42 (GESGCGKS) is an ATP binding site.

The protein belongs to the ABC transporter superfamily. As to quaternary structure, the complex is composed of two ATP-binding proteins (NikD and NikE), two transmembrane proteins (NikB and NikC) and a solute-binding protein (NikA).

It is found in the cell membrane. It catalyses the reaction Ni(2+)(out) + ATP + H2O = Ni(2+)(in) + ADP + phosphate + H(+). In terms of biological role, part of the ABC transporter complex NikABCDE (Opp2) involved in nickel import. Probably responsible for energy coupling to the transport system. This is Nickel import system ATP-binding protein NikE from Staphylococcus aureus (strain Mu50 / ATCC 700699).